A 486-amino-acid chain; its full sequence is Amyloid-beta A4 precursor protein-binding family B member 3 (486 aa).

A WW domain is found at 29–61; the sequence is TGLPPGWRKIRDAAGTYYWHVPSGSTQWQRPTW. PID domains are found at residues 113-280 and 285-440; these read EPGA…QVEL and SQAA…RTSS. Residues 438 to 460 form a disordered region; sequence TSSMDSPGGPLPPPLLKGGAGGA.

As to quaternary structure, interacts with APP (via intracellular domain). Interacts with APLP1 and APLP2 (via intracellular domain).

The protein resides in the cytoplasm. It is found in the nucleus. Its function is as follows. May modulate the internalization of amyloid-beta precursor protein. The sequence is that of Amyloid-beta A4 precursor protein-binding family B member 3 from Mus musculus (Mouse).